The sequence spans 120 residues: NAD(P)H-quinone oxidoreductase subunit 3, chloroplastic (120 aa).

Transmembrane regions (helical) follow at residues Tyr7–Ile27, Met64–Met84, and Leu89–Ile109.

Belongs to the complex I subunit 3 family. In terms of assembly, NDH is composed of at least 16 different subunits, 5 of which are encoded in the nucleus.

Its subcellular location is the plastid. The protein resides in the chloroplast thylakoid membrane. The enzyme catalyses a plastoquinone + NADH + (n+1) H(+)(in) = a plastoquinol + NAD(+) + n H(+)(out). It catalyses the reaction a plastoquinone + NADPH + (n+1) H(+)(in) = a plastoquinol + NADP(+) + n H(+)(out). In terms of biological role, NDH shuttles electrons from NAD(P)H:plastoquinone, via FMN and iron-sulfur (Fe-S) centers, to quinones in the photosynthetic chain and possibly in a chloroplast respiratory chain. The immediate electron acceptor for the enzyme in this species is believed to be plastoquinone. Couples the redox reaction to proton translocation, and thus conserves the redox energy in a proton gradient. The protein is NAD(P)H-quinone oxidoreductase subunit 3, chloroplastic of Anthoceros angustus (Hornwort).